The chain runs to 426 residues: 26S proteasome regulatory subunit 7B (426 aa).

An ATP-binding site is contributed by 209 to 216 (GPPGTGKT).

It belongs to the AAA ATPase family.

It localises to the cytoplasm. The protein resides in the nucleus. Its function is as follows. The 26S proteasome is involved in the ATP-dependent degradation of ubiquitinated proteins. The regulatory (or ATPase) complex confers ATP dependency and substrate specificity to the 26S complex. This chain is 26S proteasome regulatory subunit 7B (RPT1B), found in Oryza sativa subsp. japonica (Rice).